The sequence spans 200 residues: 3-isopropylmalate dehydratase small subunit (200 aa).

Belongs to the LeuD family. LeuD type 1 subfamily. In terms of assembly, heterodimer of LeuC and LeuD.

The enzyme catalyses (2R,3S)-3-isopropylmalate = (2S)-2-isopropylmalate. Its pathway is amino-acid biosynthesis; L-leucine biosynthesis; L-leucine from 3-methyl-2-oxobutanoate: step 2/4. Catalyzes the isomerization between 2-isopropylmalate and 3-isopropylmalate, via the formation of 2-isopropylmaleate. This is 3-isopropylmalate dehydratase small subunit from Vibrio parahaemolyticus serotype O3:K6 (strain RIMD 2210633).